A 324-amino-acid chain; its full sequence is Phospho-N-acetylmuramoyl-pentapeptide-transferase (324 aa).

10 helical membrane-spanning segments follow: residues 5-25 (VILF…PIFI), 55-75 (GGLM…DIFF), 81-101 (TYML…DDFI), 122-142 (LIAL…VVSI), 147-167 (VSLD…VGGS), 176-196 (LDGL…VLAW), 203-223 (VAIF…FNAH), 227-247 (VFMG…IAIL), 250-270 (LEIL…SVII), and 302-322 (VVVT…YIEV).

It belongs to the glycosyltransferase 4 family. MraY subfamily. Mg(2+) serves as cofactor.

Its subcellular location is the cell membrane. It catalyses the reaction UDP-N-acetyl-alpha-D-muramoyl-L-alanyl-gamma-D-glutamyl-meso-2,6-diaminopimeloyl-D-alanyl-D-alanine + di-trans,octa-cis-undecaprenyl phosphate = di-trans,octa-cis-undecaprenyl diphospho-N-acetyl-alpha-D-muramoyl-L-alanyl-D-glutamyl-meso-2,6-diaminopimeloyl-D-alanyl-D-alanine + UMP. Its pathway is cell wall biogenesis; peptidoglycan biosynthesis. Its function is as follows. Catalyzes the initial step of the lipid cycle reactions in the biosynthesis of the cell wall peptidoglycan: transfers peptidoglycan precursor phospho-MurNAc-pentapeptide from UDP-MurNAc-pentapeptide onto the lipid carrier undecaprenyl phosphate, yielding undecaprenyl-pyrophosphoryl-MurNAc-pentapeptide, known as lipid I. The chain is Phospho-N-acetylmuramoyl-pentapeptide-transferase from Anoxybacillus flavithermus (strain DSM 21510 / WK1).